The primary structure comprises 178 residues: Peptide deformylase (178 aa).

Fe cation-binding residues include cysteine 96 and histidine 138. The active site involves glutamate 139. Residue histidine 142 coordinates Fe cation.

Belongs to the polypeptide deformylase family. It depends on Fe(2+) as a cofactor.

The catalysed reaction is N-terminal N-formyl-L-methionyl-[peptide] + H2O = N-terminal L-methionyl-[peptide] + formate. Functionally, removes the formyl group from the N-terminal Met of newly synthesized proteins. Requires at least a dipeptide for an efficient rate of reaction. N-terminal L-methionine is a prerequisite for activity but the enzyme has broad specificity at other positions. The sequence is that of Peptide deformylase from Bartonella tribocorum (strain CIP 105476 / IBS 506).